Here is a 670-residue protein sequence, read N- to C-terminus: Proline-rich receptor-like protein kinase PERK5 (670 aa).

The interval 1–181 is disordered; sequence MADSPVDSSP…SGDSDSSSGN (181 aa). Residues 1 to 186 are Extracellular-facing; it reads MADSPVDSSP…SSSGNHPQAN (186 aa). A compositionally biased stretch (low complexity) spans 14–31; sequence TSNGTPPSNGTSPSNESS. N-linked (GlcNAc...) asparagine glycans are attached at residues N22 and N28. 2 stretches are compositionally biased toward pro residues: residues 32 to 62 and 84 to 109; these read PPTP…PAPP and PQTP…PPQT. An N-linked (GlcNAc...) asparagine glycan is attached at N130. The span at 132–141 shows a compositional bias: low complexity; the sequence is TNGGNNNRDG. Residue N151 is glycosylated (N-linked (GlcNAc...) asparagine). Residues 167 to 181 show a composition bias toward low complexity; it reads SPPQNSGDSDSSSGN. A helical membrane pass occupies residues 187-207; sequence IGLIIGVLVGAGLLLLLAVCI. The Cytoplasmic segment spans residues 208–670; sequence CICCNRKKKK…RGSMKRNPQL (463 aa). The residue at position 301 (T301) is a Phosphothreonine. In terms of domain architecture, Protein kinase spans 312-590; that stretch reads FAQSNLLGQG…VRALEGDMSM (279 aa). ATP-binding positions include 318 to 326 and K340; that span reads LGQGGFGYV. At Y385 the chain carries Phosphotyrosine. D436 serves as the catalytic Proton acceptor. S469 is modified (phosphoserine). 2 positions are modified to phosphothreonine: T470 and T475. At Y483 the chain carries Phosphotyrosine. Disordered stretches follow at residues 589 to 613 and 635 to 670; these read SMDD…VSSE and EYQS…NPQL. Residues 599-613 are compositionally biased toward polar residues; the sequence is PGQSTYLSPGSVSSE.

The protein belongs to the protein kinase superfamily. Ser/Thr protein kinase family. In terms of tissue distribution, mostly expressed in flower buds.

Its subcellular location is the cell membrane. It carries out the reaction L-seryl-[protein] + ATP = O-phospho-L-seryl-[protein] + ADP + H(+). The enzyme catalyses L-threonyl-[protein] + ATP = O-phospho-L-threonyl-[protein] + ADP + H(+). The chain is Proline-rich receptor-like protein kinase PERK5 (PERK5) from Arabidopsis thaliana (Mouse-ear cress).